We begin with the raw amino-acid sequence, 86 residues long: Large ribosomal subunit protein uL23 (86 aa).

It belongs to the universal ribosomal protein uL23 family. As to quaternary structure, part of the 50S ribosomal subunit. Contacts protein L29.

Binds to 23S rRNA. One of the proteins that surrounds the polypeptide exit tunnel on the outside of the ribosome. The chain is Large ribosomal subunit protein uL23 from Caldivirga maquilingensis (strain ATCC 700844 / DSM 13496 / JCM 10307 / IC-167).